The primary structure comprises 124 residues: Fluoride-specific ion channel FluC (124 aa).

The next 4 membrane-spanning stretches (helical) occupy residues 4 to 24, 35 to 55, 62 to 82, and 95 to 115; these read VLFV…ISLL, FGTL…FALG, PEIK…FSTF, and LVKA…VVYL. Residues glycine 74 and threonine 77 each coordinate Na(+).

This sequence belongs to the fluoride channel Fluc/FEX (TC 1.A.43) family.

It localises to the cell inner membrane. It catalyses the reaction fluoride(in) = fluoride(out). Na(+) is not transported, but it plays an essential structural role and its presence is essential for fluoride channel function. Fluoride-specific ion channel. Important for reducing fluoride concentration in the cell, thus reducing its toxicity. The protein is Fluoride-specific ion channel FluC of Shewanella halifaxensis (strain HAW-EB4).